The following is a 393-amino-acid chain: MALSRLSSRSNTFLKPAITALPSSIRRHVSTDSSPITIETAVPFTSHLCESPSRSVETSSEEILAFFRDMARMRRMEIAADSLYKAKLIRGFCHLYDGQEALAVGMEAAITKKDAIITSYRDHCTFIGRGGKLVDAFSELMGRKTGCSHGKGGSMHFYKKDASFYGGHGIVGAQIPLGCGLAFAQKYNKDEAVTFALYGDGAANQGQLFEALNISALWDLPAILVCENNHYGMGTATWRSAKSPAYFKRGDYVPGLKVDGMDALAVKQACKFAKEHALKNGPIILEMDTYRYHGHSMSDPGSTYRTRDEISGVRQVRDPIERVRKLLLTHDIATEKELKDMEKEIRKEVDDAVAQAKESPIPDASELFTNMYVKDCGVESFGADRKELKVTLP.

The transit peptide at 1 to 28 directs the protein to the mitochondrion; it reads MALSRLSSRSNTFLKPAITALPSSIRRH. His-94, Tyr-120, Arg-121, Gly-169, Val-171, Asp-200, Gly-201, Ala-202, Asn-229, and Tyr-231 together coordinate pyruvate. Residues Tyr-120, Arg-121, Gly-169, Val-171, Asp-200, Gly-201, Ala-202, and Asn-229 each contribute to the thiamine diphosphate site. Residue Asp-200 coordinates Mg(2+). Mg(2+) contacts are provided by Asn-229 and Tyr-231. A thiamine diphosphate-binding site is contributed by His-295.

In terms of assembly, tetramer of 2 alpha and 2 beta subunits. The cofactor is thiamine diphosphate. Mg(2+) is required as a cofactor.

It localises to the mitochondrion matrix. It carries out the reaction N(6)-[(R)-lipoyl]-L-lysyl-[protein] + pyruvate + H(+) = N(6)-[(R)-S(8)-acetyldihydrolipoyl]-L-lysyl-[protein] + CO2. E1 activity is regulated by phosphorylation (inactivation) and dephosphorylation (activation) of the alpha subunit. In terms of biological role, the pyruvate dehydrogenase complex catalyzes the overall conversion of pyruvate to acetyl-CoA and CO(2). It contains multiple copies of three enzymatic components: pyruvate dehydrogenase (E1), dihydrolipoamide acetyltransferase (E2) and lipoamide dehydrogenase (E3). This chain is Pyruvate dehydrogenase E1 component subunit alpha-2, mitochondrial (IAR4), found in Arabidopsis thaliana (Mouse-ear cress).